The primary structure comprises 468 residues: MSHQSELIETDIDAYLAQHERKELLRFLTCGSVDDGKSTLIGRLLHDSKMIYEDQLAAVASDTTKHGTTGEKIDLALLVDGLQAEREQGITIDVAYRYFSTAKRKFIIADTPGHEQYTRNMATGASTCDLAVILIDARYGVQTQTRRHSYIASLLGIKHVVVAINKMDLVEFSESRFEEIKQSYLDLSKSLNPAELHFVPMSALDGDNVVNISERTPWYSGKSLMQILETVEIASDKNADDFRFPVQFVNRPNLNFRGFCGTVASGVVKVGDKVKALPSGKTSTVKSIVTFDGELDEAFVGQAVTLTLADEIDISRGDMVVLADSEQTLSNRLRAHLVWMSEAELKPGKQYLFKFASKVTPGVVADIEYRVDVNTFEKSEESAMQLNDIAVVDVQLEQEVVVDAYQKNRATGAFIVIDRLTNITVGAGMAIEALASAAATKGDYSEFEVELNALVRKHFPHWDAKKIG.

Residues 22–239 (KELLRFLTCG…TVEIASDKNA (218 aa)) enclose the tr-type G domain. The tract at residues 31–38 (GSVDDGKS) is G1. Residue 31 to 38 (GSVDDGKS) coordinates GTP. The G2 stretch occupies residues 89-93 (GITID). The segment at 110 to 113 (DTPG) is G3. GTP is bound by residues 110-114 (DTPGH) and 165-168 (NKMD). The tract at residues 165-168 (NKMD) is G4. The interval 202-204 (SAL) is G5.

This sequence belongs to the TRAFAC class translation factor GTPase superfamily. Classic translation factor GTPase family. CysN/NodQ subfamily. Heterodimer composed of CysD, the smaller subunit, and CysN.

It catalyses the reaction sulfate + ATP + H(+) = adenosine 5'-phosphosulfate + diphosphate. It functions in the pathway sulfur metabolism; hydrogen sulfide biosynthesis; sulfite from sulfate: step 1/3. With CysD forms the ATP sulfurylase (ATPS) that catalyzes the adenylation of sulfate producing adenosine 5'-phosphosulfate (APS) and diphosphate, the first enzymatic step in sulfur assimilation pathway. APS synthesis involves the formation of a high-energy phosphoric-sulfuric acid anhydride bond driven by GTP hydrolysis by CysN coupled to ATP hydrolysis by CysD. The polypeptide is Sulfate adenylyltransferase subunit 1 (Teredinibacter turnerae (strain ATCC 39867 / T7901)).